Consider the following 326-residue polypeptide: Putative HTH-type transcriptional regulatory protein MmarC5_0898 (326 aa).

One can recognise an HTH cro/C1-type domain in the interval 128 to 183; that stretch reads LRETREKLKISVGELAEISRVSRKTIYKYEQNEANPSAEVAIKIEEYLDVPLIKGI. Positions 139 to 158 form a DNA-binding region, H-T-H motif; sequence VGELAEISRVSRKTIYKYEQ.

The sequence is that of Putative HTH-type transcriptional regulatory protein MmarC5_0898 from Methanococcus maripaludis (strain C5 / ATCC BAA-1333).